Here is a 257-residue protein sequence, read N- to C-terminus: Exosome complex component Rrp4 (257 aa).

The S1 motif domain occupies 65–137; that stretch reads GDNVLGKIVD…EVNQIDLTTK (73 aa). The region spanning 147–206 is the KH domain; that stretch reads RGGQLVTITPSKVPRLIGKGGSMINMIKTLTGTRIIVGQNGWVWVSGKNDELERLAIEAI.

This sequence belongs to the RRP4 family. In terms of assembly, component of the archaeal exosome complex. Forms a trimer of Rrp4 and/or Csl4 subunits. The trimer associates with a hexameric ring-like arrangement composed of 3 Rrp41-Rrp42 heterodimers.

It is found in the cytoplasm. Functionally, non-catalytic component of the exosome, which is a complex involved in RNA degradation. Increases the RNA binding and the efficiency of RNA degradation. Confers strong poly(A) specificity to the exosome. This is Exosome complex component Rrp4 from Thermococcus kodakarensis (strain ATCC BAA-918 / JCM 12380 / KOD1) (Pyrococcus kodakaraensis (strain KOD1)).